A 168-amino-acid polypeptide reads, in one-letter code: Protein-export protein SecB (168 aa).

It belongs to the SecB family. In terms of assembly, homotetramer, a dimer of dimers. One homotetramer interacts with 1 SecA dimer.

It is found in the cytoplasm. Its function is as follows. One of the proteins required for the normal export of preproteins out of the cell cytoplasm. It is a molecular chaperone that binds to a subset of precursor proteins, maintaining them in a translocation-competent state. It also specifically binds to its receptor SecA. This is Protein-export protein SecB from Sinorhizobium medicae (strain WSM419) (Ensifer medicae).